The sequence spans 452 residues: Exodeoxyribonuclease 7 large subunit (452 aa).

It belongs to the XseA family. Heterooligomer composed of large and small subunits.

The protein localises to the cytoplasm. It carries out the reaction Exonucleolytic cleavage in either 5'- to 3'- or 3'- to 5'-direction to yield nucleoside 5'-phosphates.. Its function is as follows. Bidirectionally degrades single-stranded DNA into large acid-insoluble oligonucleotides, which are then degraded further into small acid-soluble oligonucleotides. This is Exodeoxyribonuclease 7 large subunit from Bacillus cereus (strain G9842).